The chain runs to 298 residues: Homoserine kinase (298 aa).

Position 83–93 (83–93 (PISRGLGSSSS)) interacts with ATP.

This sequence belongs to the GHMP kinase family. Homoserine kinase subfamily.

It localises to the cytoplasm. It catalyses the reaction L-homoserine + ATP = O-phospho-L-homoserine + ADP + H(+). The protein operates within amino-acid biosynthesis; L-threonine biosynthesis; L-threonine from L-aspartate: step 4/5. Catalyzes the ATP-dependent phosphorylation of L-homoserine to L-homoserine phosphate. This Clostridium botulinum (strain Eklund 17B / Type B) protein is Homoserine kinase.